A 127-amino-acid polypeptide reads, in one-letter code: uncharacterized protein (127 aa).

A run of 4 helical transmembrane segments spans residues 1 to 21, 32 to 52, 68 to 88, and 100 to 120; these read MYII…YILV, TVAA…LYVF, AFFS…IILV, and ILDN…LVFK.

This sequence belongs to the GtrA family.

It localises to the cell membrane. This is an uncharacterized protein from Bacillus subtilis (strain 168).